The primary structure comprises 371 residues: GDP-perosamine synthase (371 aa).

K186 carries the post-translational modification N6-(pyridoxal phosphate)lysine.

Belongs to the DegT/DnrJ/EryC1 family. In terms of assembly, homodimer. It depends on pyridoxal 5'-phosphate as a cofactor.

The enzyme catalyses GDP-alpha-D-perosamine + 2-oxoglutarate = GDP-4-dehydro-alpha-D-rhamnose + L-glutamate. It participates in bacterial outer membrane biogenesis; LPS O-antigen biosynthesis. Functionally, catalyzes the synthesis of GDP-perosamine from GDP-4-keto-6-deoxy-D-mannose and L-glutamate. Can use only L-glutamate as amino donor. In vitro, can also use GDP-4-keto-3,6-dideoxymannose to produce GDP-3-deoxyperosamine. Involved in the formation of S-LPS, which is required for attachment of the protein S-layer to the outer membrane surface. This Caulobacter vibrioides (strain ATCC 19089 / CIP 103742 / CB 15) (Caulobacter crescentus) protein is GDP-perosamine synthase.